Reading from the N-terminus, the 263-residue chain is Undecaprenyl-diphosphatase 3 (263 aa).

8 helical membrane-spanning segments follow: residues 15–37, 42–62, 83–103, 106–126, 142–162, 183–203, 216–236, and 242–262; these read GLTEFLPVSSTGHMILTGHLIGF, AKVFEVVIQLGSILAVVVIFW, LHIIIGMIPAGVLGVLFHSAI, VLFGPGPVVISLVAGGILMIV, ITYKQAFTIGMFQCLALWPGF, AEYTFILAVPMMVAASGLDLI, LFATGFITAFVVAMLAIVSFL, and VKLTPFAYYRFILAAVFYFFI.

It belongs to the UppP family.

The protein resides in the cell membrane. The catalysed reaction is di-trans,octa-cis-undecaprenyl diphosphate + H2O = di-trans,octa-cis-undecaprenyl phosphate + phosphate + H(+). Its function is as follows. Catalyzes the dephosphorylation of undecaprenyl diphosphate (UPP). Confers resistance to bacitracin. The chain is Undecaprenyl-diphosphatase 3 from Bacillus thuringiensis subsp. konkukian (strain 97-27).